We begin with the raw amino-acid sequence, 413 residues long: Serine/threonine-protein kinase SSN3 (413 aa).

One can recognise a Protein kinase domain in the interval 26 to 355 (YHIVGFISSG…AQEALEHPYF (330 aa)). Residues 32-40 (ISSGTYGRV) and Lys56 each bind ATP. Asp158 acts as the Proton acceptor in catalysis. The segment covering 376 to 385 (RRVTQDDNDI) has biased composition (basic and acidic residues). The segment at 376 to 413 (RRVTQDDNDIRSGSLPGTKRSGLPDDSLMGRASKRLKE) is disordered.

This sequence belongs to the protein kinase superfamily. CMGC Ser/Thr protein kinase family. CDC2/CDKX subfamily. As to quaternary structure, component of the srb8-11 complex, a regulatory module of the Mediator complex. Mg(2+) serves as cofactor.

The protein localises to the nucleus. It carries out the reaction L-seryl-[protein] + ATP = O-phospho-L-seryl-[protein] + ADP + H(+). The enzyme catalyses L-threonyl-[protein] + ATP = O-phospho-L-threonyl-[protein] + ADP + H(+). It catalyses the reaction [DNA-directed RNA polymerase] + ATP = phospho-[DNA-directed RNA polymerase] + ADP + H(+). Functionally, component of the srb8-11 complex. The srb8-11 complex is a regulatory module of the Mediator complex which is itself involved in regulation of basal and activated RNA polymerase II-dependent transcription. The srb8-11 complex may be involved in the transcriptional repression of a subset of genes regulated by Mediator. It may inhibit the association of the Mediator complex with RNA polymerase II to form the holoenzyme complex. The srb8-11 complex phosphorylates the C-terminal domain (CTD) of the largest subunit of RNA polymerase II. The chain is Serine/threonine-protein kinase SSN3 (ssn3) from Aspergillus oryzae (strain ATCC 42149 / RIB 40) (Yellow koji mold).